Consider the following 156-residue polypeptide: Small ribosomal subunit protein uS7 (156 aa).

It belongs to the universal ribosomal protein uS7 family. In terms of assembly, part of the 30S ribosomal subunit. Contacts proteins S9 and S11.

One of the primary rRNA binding proteins, it binds directly to 16S rRNA where it nucleates assembly of the head domain of the 30S subunit. Is located at the subunit interface close to the decoding center, probably blocks exit of the E-site tRNA. The polypeptide is Small ribosomal subunit protein uS7 (Synechococcus sp. (strain JA-3-3Ab) (Cyanobacteria bacterium Yellowstone A-Prime)).